We begin with the raw amino-acid sequence, 215 residues long: Glycerol-3-phosphate acyltransferase (215 aa).

Transmembrane regions (helical) follow at residues 3–23 (LILL…LWIG), 42–61 (TNTF…LIDI), 68–90 (TLLP…FAVL), 110–130 (AGVL…VFVL), 134–154 (LFSM…ISVL), and 162–182 (LLPG…AIII).

It belongs to the PlsY family. Probably interacts with PlsX.

The protein resides in the cell membrane. It carries out the reaction an acyl phosphate + sn-glycerol 3-phosphate = a 1-acyl-sn-glycero-3-phosphate + phosphate. The protein operates within lipid metabolism; phospholipid metabolism. In terms of biological role, catalyzes the transfer of an acyl group from acyl-phosphate (acyl-PO(4)) to glycerol-3-phosphate (G3P) to form lysophosphatidic acid (LPA). This enzyme utilizes acyl-phosphate as fatty acyl donor, but not acyl-CoA or acyl-ACP. The protein is Glycerol-3-phosphate acyltransferase of Streptococcus equi subsp. zooepidemicus (strain MGCS10565).